Reading from the N-terminus, the 787-residue chain is Protein translocase subunit SecA 2 (787 aa).

ATP contacts are provided by residues Gln86, 104–108 (GEGKT), and Asp493.

It belongs to the SecA family. As to quaternary structure, monomer and homodimer. Part of the essential Sec protein translocation apparatus which comprises SecA, SecYEG and auxiliary proteins SecDF. Other proteins may also be involved.

The protein localises to the cell membrane. The protein resides in the cytoplasm. It carries out the reaction ATP + H2O + cellular proteinSide 1 = ADP + phosphate + cellular proteinSide 2.. Part of the Sec protein translocase complex. Interacts with the SecYEG preprotein conducting channel. Has a central role in coupling the hydrolysis of ATP to the transfer of proteins into and across the cell membrane, serving as an ATP-driven molecular motor driving the stepwise translocation of polypeptide chains across the membrane. This is Protein translocase subunit SecA 2 from Bacillus thuringiensis subsp. konkukian (strain 97-27).